The following is a 100-amino-acid chain: NADH-quinone oxidoreductase subunit K (100 aa).

Helical transmembrane passes span M1–G21, I28–A48, and F64–F84.

The protein belongs to the complex I subunit 4L family. In terms of assembly, NDH-1 is composed of 14 different subunits. Subunits NuoA, H, J, K, L, M, N constitute the membrane sector of the complex.

The protein localises to the cell inner membrane. It carries out the reaction a quinone + NADH + 5 H(+)(in) = a quinol + NAD(+) + 4 H(+)(out). Its function is as follows. NDH-1 shuttles electrons from NADH, via FMN and iron-sulfur (Fe-S) centers, to quinones in the respiratory chain. The immediate electron acceptor for the enzyme in this species is believed to be ubiquinone. Couples the redox reaction to proton translocation (for every two electrons transferred, four hydrogen ions are translocated across the cytoplasmic membrane), and thus conserves the redox energy in a proton gradient. The protein is NADH-quinone oxidoreductase subunit K of Helicobacter pylori (strain G27).